The primary structure comprises 452 residues: Zinc finger protein 672 (452 aa).

4 consecutive C2H2-type zinc fingers follow at residues 14 to 36 (YSCS…ERAH), 42 to 64 (FRCL…RRTH), 70 to 92 (YICS…LGAH), and 99 to 122 (CPCR…RRQH). The C2H2-type 5; degenerate zinc-finger motif lies at 128–150 (RRCPLCARTFRQSALLFHQARAH). 9 consecutive C2H2-type zinc fingers follow at residues 163-185 (HRCA…ARIH), 199-221 (HQCG…LQTH), 227-249 (FKCP…QRTH), 255-277 (YACG…RRSH), 283-305 (HACA…QRIH), 311-333 (FACP…RRTH), 339-361 (YRCE…RRNH), 367-389 (HKCP…RKTH), and 395-417 (AECA…QRAH).

The protein belongs to the krueppel C2H2-type zinc-finger protein family.

The protein resides in the nucleus. May be involved in transcriptional regulation. The sequence is that of Zinc finger protein 672 from Homo sapiens (Human).